The following is a 428-amino-acid chain: Gamma-glutamyl phosphate reductase (428 aa).

Belongs to the gamma-glutamyl phosphate reductase family.

It is found in the cytoplasm. The catalysed reaction is L-glutamate 5-semialdehyde + phosphate + NADP(+) = L-glutamyl 5-phosphate + NADPH + H(+). It participates in amino-acid biosynthesis; L-proline biosynthesis; L-glutamate 5-semialdehyde from L-glutamate: step 2/2. In terms of biological role, catalyzes the NADPH-dependent reduction of L-glutamate 5-phosphate into L-glutamate 5-semialdehyde and phosphate. The product spontaneously undergoes cyclization to form 1-pyrroline-5-carboxylate. The sequence is that of Gamma-glutamyl phosphate reductase from Mesorhizobium japonicum (strain LMG 29417 / CECT 9101 / MAFF 303099) (Mesorhizobium loti (strain MAFF 303099)).